The sequence spans 183 residues: Probable transcription termination protein NusA (183 aa).

In terms of domain architecture, KH spans 32–98; that stretch reads DERVAFIVKE…DDVWVKRVGK (67 aa). Positions 149-183 are disordered; that stretch reads RKRAKRPVVKDQQQEQTETKQETDVQQDVKETVKE. The segment covering 156–183 has biased composition (basic and acidic residues); it reads VVKDQQQEQTETKQETDVQQDVKETVKE.

The protein belongs to the NusA family.

Its subcellular location is the cytoplasm. Its function is as follows. Participates in transcription termination. This Methanocaldococcus jannaschii (strain ATCC 43067 / DSM 2661 / JAL-1 / JCM 10045 / NBRC 100440) (Methanococcus jannaschii) protein is Probable transcription termination protein NusA.